The sequence spans 977 residues: Synaptopodin 2-like protein (977 aa).

The 83-residue stretch at 6–88 (EVLVTLSGGA…QLVLTVQRLA (83 aa)) folds into the PDZ domain. Disordered stretches follow at residues 91-226 (GPVQ…GPLR), 317-352 (AGTGAEEEDGVPPTSESELDEEAFSDARSLTNQSDW), and 364-677 (AGSR…EDAL). Ser108 and Ser111 each carry phosphoserine. Over residues 109–123 (PLSPEPPGAPVPQPL) the composition is skewed to pro residues. Position 141 is a phosphothreonine (Thr141). Ser143, Ser178, and Ser180 each carry phosphoserine. The span at 183 to 192 (EPAPTIPGPP) shows a compositional bias: pro residues. The span at 194 to 203 (QGDSRVSSPS) shows a compositional bias: polar residues. Residues 216–226 (EALLLPHGPLR) are compositionally biased toward low complexity. 5 positions are modified to phosphoserine: Ser345, Ser350, Ser374, Ser381, and Ser384. Arg386 carries the post-translational modification Omega-N-methylarginine. The segment covering 436–450 (PPSPLPAPVASPRPF) has biased composition (pro residues). Omega-N-methylarginine is present on residues Arg466, Arg469, and Arg479. Positions 510-525 (LSSQGPTPLPSFTSGV) are enriched in polar residues. 2 stretches are compositionally biased toward low complexity: residues 530 to 545 (PVSGSPSTPRSSGPVT) and 572 to 595 (SAAAMTSTASIFLSAPLRPSARPE). A compositionally biased stretch (pro residues) spans 596-607 (APAPGPGAPEPP). Residues Ser670 and Ser678 each carry the phosphoserine modification. The segment at 697–802 (TLPHVTPKTP…PSLPPSWKYS (106 aa)) is disordered. A compositionally biased stretch (pro residues) spans 704 to 730 (KTPPPMAPKTPPPMTPKTPPPVAPKPP). A phosphothreonine mark is found at Thr705 and Thr713. The residue at position 757 (Arg757) is an Omega-N-methylarginine. Residues 781-796 (GLGPRPRSPSPTPSLP) are compositionally biased toward pro residues. 2 positions are modified to phosphoserine: Ser788 and Ser790. Position 792 is a phosphothreonine (Thr792). An omega-N-methylarginine mark is found at Arg806, Arg826, and Arg889. At Ser891 the chain carries Phosphoserine. Residues Thr892 and Thr898 each carry the phosphothreonine modification. Arg910 carries the omega-N-methylarginine modification. At Arg921 the chain carries Asymmetric dimethylarginine; alternate. Arg921 carries the omega-N-methylarginine; alternate modification. Positions 922–950 (TELASAPVPSPAPPPEAPRGLGASPSSCG) are disordered. A compositionally biased stretch (pro residues) spans 929–938 (VPSPAPPPEA). Residues Arg955 and Arg957 each carry the omega-N-methylarginine modification.

It belongs to the synaptopodin family.

It localises to the cytoplasm. Its subcellular location is the cytoskeleton. In terms of biological role, actin-associated protein that may play a role in modulating actin-based shape. This Homo sapiens (Human) protein is Synaptopodin 2-like protein (SYNPO2L).